The sequence spans 465 residues: Light-independent protochlorophyllide reductase subunit N (465 aa).

[4Fe-4S] cluster is bound by residues Cys-22, Cys-47, and Cys-107.

The protein belongs to the BchN/ChlN family. Protochlorophyllide reductase is composed of three subunits; ChlL, ChlN and ChlB. Forms a heterotetramer of two ChlB and two ChlN subunits. It depends on [4Fe-4S] cluster as a cofactor.

It localises to the plastid. The protein resides in the chloroplast. The enzyme catalyses chlorophyllide a + oxidized 2[4Fe-4S]-[ferredoxin] + 2 ADP + 2 phosphate = protochlorophyllide a + reduced 2[4Fe-4S]-[ferredoxin] + 2 ATP + 2 H2O. It participates in porphyrin-containing compound metabolism; chlorophyll biosynthesis (light-independent). Functionally, component of the dark-operative protochlorophyllide reductase (DPOR) that uses Mg-ATP and reduced ferredoxin to reduce ring D of protochlorophyllide (Pchlide) to form chlorophyllide a (Chlide). This reaction is light-independent. The NB-protein (ChlN-ChlB) is the catalytic component of the complex. The polypeptide is Light-independent protochlorophyllide reductase subunit N (Marchantia polymorpha (Common liverwort)).